A 361-amino-acid chain; its full sequence is Peptide chain release factor 1 (361 aa).

N5-methylglutamine is present on Gln237. Positions Glu286–Arg296 are enriched in basic and acidic residues. Residues Glu286–Arg305 form a disordered region.

The protein belongs to the prokaryotic/mitochondrial release factor family. Post-translationally, methylated by PrmC. Methylation increases the termination efficiency of RF1.

It is found in the cytoplasm. Functionally, peptide chain release factor 1 directs the termination of translation in response to the peptide chain termination codons UAG and UAA. The polypeptide is Peptide chain release factor 1 (Shewanella pealeana (strain ATCC 700345 / ANG-SQ1)).